An 87-amino-acid chain; its full sequence is Translation initiation factor IF-1 2 (87 aa).

An S1-like domain is found at methionine 1–threonine 72. The disordered stretch occupies residues glycine 65–arginine 87.

The protein belongs to the IF-1 family. As to quaternary structure, component of the 30S ribosomal translation pre-initiation complex which assembles on the 30S ribosome in the order IF-2 and IF-3, IF-1 and N-formylmethionyl-tRNA(fMet); mRNA recruitment can occur at any time during PIC assembly.

It is found in the cytoplasm. Functionally, one of the essential components for the initiation of protein synthesis. Stabilizes the binding of IF-2 and IF-3 on the 30S subunit to which N-formylmethionyl-tRNA(fMet) subsequently binds. Helps modulate mRNA selection, yielding the 30S pre-initiation complex (PIC). Upon addition of the 50S ribosomal subunit IF-1, IF-2 and IF-3 are released leaving the mature 70S translation initiation complex. The protein is Translation initiation factor IF-1 2 of Nitratidesulfovibrio vulgaris (strain ATCC 29579 / DSM 644 / CCUG 34227 / NCIMB 8303 / VKM B-1760 / Hildenborough) (Desulfovibrio vulgaris).